Reading from the N-terminus, the 216-residue chain is Serine acetyltransferase (216 aa).

This sequence belongs to the transferase hexapeptide repeat family.

It localises to the cytoplasm. It catalyses the reaction L-serine + acetyl-CoA = O-acetyl-L-serine + CoA. Its pathway is amino-acid biosynthesis; L-cysteine biosynthesis; L-cysteine from L-serine: step 1/2. Inhibited by cysteine. In terms of biological role, catalyzes the acetylation of serine by acetyl-CoA to produce O-acetylserine (OAS). In Bacillus licheniformis (strain ATCC 14580 / DSM 13 / JCM 2505 / CCUG 7422 / NBRC 12200 / NCIMB 9375 / NCTC 10341 / NRRL NRS-1264 / Gibson 46), this protein is Serine acetyltransferase.